The following is a 1091-amino-acid chain: AP-3 complex subunit beta-1 (1091 aa).

Disordered regions lie at residues 1-32 and 267-290; these read MSGN…SPSG and EDNE…KKKP. Over residues 267–288 the composition is skewed to basic and acidic residues; the sequence is EDNEKNFYESDDEQKEKTDQKK. 2 positions are modified to phosphoserine: serine 276 and serine 609. The segment at 664–807 is disordered; sequence AGKAKKENPA…EKEKKTKEDR (144 aa). Basic and acidic residues predominate over residues 667–678; the sequence is AKKENPARKFYS. Acidic residues-rich tracts occupy residues 679–695 and 703–718; these read DSEE…DSES and EQDE…SEDS. Residues 719 to 736 are compositionally biased toward basic and acidic residues; it reads SSEHRSDSESVSEVGDKR. Residues serine 748 and serine 750 each carry the phosphoserine modification. Residues 763–775 show a composition bias toward low complexity; that stretch reads SDSSSTDSSSVEE. The span at 776–789 shows a compositional bias: acidic residues; it reads SSSDSESESESESE. Basic and acidic residues predominate over residues 790–807; the sequence is SESKKVTMEKEKKTKEDR.

It belongs to the adaptor complexes large subunit family. In terms of assembly, adaptor protein complex 3 (AP-3) is a heterotetramer composed of two large adaptins (delta-type subunit AP3D1 and beta-type subunit AP3B1 or AP3B2), a medium adaptin (mu-type subunit AP3M1 or AP3M2) and a small adaptin (sigma-type subunit APS1 or AP3S2). AP-3 associates with the BLOC-1 complex. Interacts with KIF3A; interaction is direct; interaction is impaired by pyrophosphorylation of AP3B1. In terms of processing, phosphorylated on serine residues. Pyrophosphorylation by 5-diphosphoinositol pentakisphosphate (5-IP7) impairs interaction with KIF3A. Serine pyrophosphorylation is achieved by Mg(2+)-dependent, but enzyme independent transfer of a beta-phosphate from a inositol pyrophosphate to a pre-phosphorylated serine residue.

It is found in the cytoplasmic vesicle. It localises to the clathrin-coated vesicle membrane. Its subcellular location is the golgi apparatus. Subunit of non-clathrin- and clathrin-associated adaptor protein complex 3 (AP-3) that plays a role in protein sorting in the late-Golgi/trans-Golgi network (TGN) and/or endosomes. The AP complexes mediate both the recruitment of clathrin to membranes and the recognition of sorting signals within the cytosolic tails of transmembrane cargo molecules. AP-3 appears to be involved in the sorting of a subset of transmembrane proteins targeted to lysosomes and lysosome-related organelles. In concert with the BLOC-1 complex, AP-3 is required to target cargos into vesicles assembled at cell bodies for delivery into neurites and nerve terminals. In Canis lupus familiaris (Dog), this protein is AP-3 complex subunit beta-1 (AP3B1).